The following is an 855-amino-acid chain: Valine--tRNA ligase (855 aa).

Positions 44–54 match the 'HIGH' region motif; the sequence is PYPTGNFHIGN. A 'KMSKS' region motif is present at residues 522–526; that stretch reads KMSKS. Residue lysine 525 participates in ATP binding.

This sequence belongs to the class-I aminoacyl-tRNA synthetase family. ValS type 2 subfamily.

It is found in the cytoplasm. It carries out the reaction tRNA(Val) + L-valine + ATP = L-valyl-tRNA(Val) + AMP + diphosphate. Its function is as follows. Catalyzes the attachment of valine to tRNA(Val). As ValRS can inadvertently accommodate and process structurally similar amino acids such as threonine, to avoid such errors, it has a 'posttransfer' editing activity that hydrolyzes mischarged Thr-tRNA(Val) in a tRNA-dependent manner. The sequence is that of Valine--tRNA ligase from Methanothrix thermoacetophila (strain DSM 6194 / JCM 14653 / NBRC 101360 / PT) (Methanosaeta thermophila).